Reading from the N-terminus, the 691-residue chain is Elongation factor G (691 aa).

The region spanning 8–282 is the tr-type G domain; that stretch reads NKTRNIGIMA…AVVEFLPAPV (275 aa). GTP-binding positions include 17-24, 81-85, and 135-138; these read AHIDAGKT, DTPGH, and NKMD.

It belongs to the TRAFAC class translation factor GTPase superfamily. Classic translation factor GTPase family. EF-G/EF-2 subfamily.

The protein resides in the cytoplasm. Catalyzes the GTP-dependent ribosomal translocation step during translation elongation. During this step, the ribosome changes from the pre-translocational (PRE) to the post-translocational (POST) state as the newly formed A-site-bound peptidyl-tRNA and P-site-bound deacylated tRNA move to the P and E sites, respectively. Catalyzes the coordinated movement of the two tRNA molecules, the mRNA and conformational changes in the ribosome. This chain is Elongation factor G, found in Heliobacterium modesticaldum (strain ATCC 51547 / Ice1).